A 133-amino-acid chain; its full sequence is Small ribosomal subunit protein uS11 (133 aa).

The tract at residues Met-1–Gly-23 is disordered. Basic residues predominate over residues Gly-7–Lys-17.

The protein belongs to the universal ribosomal protein uS11 family. As to quaternary structure, part of the 30S ribosomal subunit. Interacts with proteins S7 and S18. Binds to IF-3.

Functionally, located on the platform of the 30S subunit, it bridges several disparate RNA helices of the 16S rRNA. Forms part of the Shine-Dalgarno cleft in the 70S ribosome. In Arthrobacter sp. (strain FB24), this protein is Small ribosomal subunit protein uS11.